A 76-amino-acid chain; its full sequence is Sec-independent protein translocase protein TatA (76 aa).

The chain crosses the membrane as a helical span at residues 1 to 21; the sequence is MGSFSIWHWLIVLVIVMLIFG. The segment at 47-76 is disordered; the sequence is NADKPAEEAQPTQQVGGHTIDVEVKEKTKS. A compositionally biased stretch (basic and acidic residues) spans 66–76; the sequence is IDVEVKEKTKS.

Belongs to the TatA/E family. As to quaternary structure, the Tat system comprises two distinct complexes: a TatABC complex, containing multiple copies of TatA, TatB and TatC subunits, and a separate TatA complex, containing only TatA subunits. Substrates initially bind to the TatABC complex, which probably triggers association of the separate TatA complex to form the active translocon.

It localises to the cell inner membrane. Part of the twin-arginine translocation (Tat) system that transports large folded proteins containing a characteristic twin-arginine motif in their signal peptide across membranes. TatA could form the protein-conducting channel of the Tat system. This is Sec-independent protein translocase protein TatA from Dechloromonas aromatica (strain RCB).